Here is a 432-residue protein sequence, read N- to C-terminus: Anaerobic glycerol-3-phosphate dehydrogenase subunit B (432 aa).

The protein belongs to the anaerobic G-3-P dehydrogenase subunit B family. In terms of assembly, composed of a catalytic GlpA/B dimer and of membrane bound GlpC. It depends on FMN as a cofactor.

It catalyses the reaction a quinone + sn-glycerol 3-phosphate = dihydroxyacetone phosphate + a quinol. It functions in the pathway polyol metabolism; glycerol degradation via glycerol kinase pathway; glycerone phosphate from sn-glycerol 3-phosphate (anaerobic route): step 1/1. Its function is as follows. Conversion of glycerol 3-phosphate to dihydroxyacetone. Uses fumarate or nitrate as electron acceptor. The chain is Anaerobic glycerol-3-phosphate dehydrogenase subunit B (glpB) from Haemophilus influenzae (strain ATCC 51907 / DSM 11121 / KW20 / Rd).